Here is a 1391-residue protein sequence, read N- to C-terminus: DNA-directed RNA polymerase subunit beta' (1391 aa).

Positions 72, 74, 87, and 90 each coordinate Zn(2+). Residues Asp462, Asp464, and Asp466 each coordinate Mg(2+). Cys816, Cys890, Cys897, and Cys900 together coordinate Zn(2+).

This sequence belongs to the RNA polymerase beta' chain family. The RNAP catalytic core consists of 2 alpha, 1 beta, 1 beta' and 1 omega subunit. When a sigma factor is associated with the core the holoenzyme is formed, which can initiate transcription. The cofactor is Mg(2+). Requires Zn(2+) as cofactor.

It catalyses the reaction RNA(n) + a ribonucleoside 5'-triphosphate = RNA(n+1) + diphosphate. Its function is as follows. DNA-dependent RNA polymerase catalyzes the transcription of DNA into RNA using the four ribonucleoside triphosphates as substrates. This Neisseria meningitidis serogroup C (strain 053442) protein is DNA-directed RNA polymerase subunit beta'.